The primary structure comprises 271 residues: MQFPHPGPAAAPAVGVPLYAPTPLLQPAHPTPFYIDDILGRGPAAPTPTPTLPSPNSSFTSLVSSYRTPVYEPTPVHPAFSHHPAAALAAAYGPSGFGGPLYPFPRTVNDYTHALLRHDPLGKPLLWSPFLQRPLHKRKGGQVRFSNDQTVELEKKFETQKYLSPPERKRLAKMLQLSERQVKTWFQNRRAKWRRLKQENPQSNKKDALDSLDTSCEQGQDLPSEQNKGASLDRSQCSPSPASQEDPDSEISEDSDQEVDIEGDKGYFNAG.

Residues 1–138 (MQFPHPGPAA…PFLQRPLHKR (138 aa)) are interaction with SOX13. The residue at position 54 (S54) is a Phosphoserine. Residues 138–197 (RKGGQVRFSNDQTVELEKKFETQKYLSPPERKRLAKMLQLSERQVKTWFQNRRAKWRRLK) constitute a DNA-binding region (homeobox). Positions 138–271 (RKGGQVRFSN…EGDKGYFNAG (134 aa)) are required for WNT signaling induction. Residues 195–271 (RLKQENPQSN…EGDKGYFNAG (77 aa)) are disordered. Residues 212-242 (LDTSCEQGQDLPSEQNKGASLDRSQCSPSPA) show a composition bias toward polar residues. The segment covering 245 to 261 (EDPDSEISEDSDQEVDI) has biased composition (acidic residues).

In terms of assembly, interacts with CD81; the interaction prevents nuclear translocation of HHEX. Interacts (via N-terminus) with SOX13; abolishes the SOX13-mediated inhibition of WNT-mediated transcriptional activity via competitive inhibition of the SOX13-TCF7 complex. Interacts with EIF4E; the interaction inhibits EIF4E-mediated mRNA nuclear export.

The protein resides in the nucleus. It localises to the nuclear body. Its subcellular location is the cytoplasm. Functionally, recognizes the DNA sequence 5'-ATTAA-3'. Transcriptional repressor. Activator of WNT-mediated transcription in conjunction with CTNNB1. Establishes anterior identity at two levels; acts early to enhance canonical WNT-signaling by repressing expression of TLE4, and acts later to inhibit NODAL-signaling by directly targeting NODAL. Inhibits EIF4E-mediated mRNA nuclear export. May play a role in hematopoietic differentiation. This is Hematopoietically-expressed homeobox protein Hhex (Hhex) from Mus musculus (Mouse).